Reading from the N-terminus, the 385-residue chain is Aryl-alcohol dehydrogenase [NADP(+)] (385 aa).

Residue Y76 is the Proton donor of the active site. 238-248 is a binding site for NADP(+); that stretch reads NVLCAGKIRTD.

Belongs to the aldo/keto reductase family. Aldo/keto reductase 2 subfamily. The N-terminus is blocked.

The enzyme catalyses an aromatic primary alcohol + NADP(+) = an aromatic aldehyde + NADPH + H(+). The polypeptide is Aryl-alcohol dehydrogenase [NADP(+)] (Phanerodontia chrysosporium (White-rot fungus)).